A 225-amino-acid polypeptide reads, in one-letter code: Ribosome maturation factor RimM (225 aa).

In terms of domain architecture, PRC barrel spans 144–225; that stretch reads ADEFYWVDLI…RIVVDWEADY (82 aa).

It belongs to the RimM family. As to quaternary structure, binds ribosomal protein uS19.

It localises to the cytoplasm. Its function is as follows. An accessory protein needed during the final step in the assembly of 30S ribosomal subunit, possibly for assembly of the head region. Essential for efficient processing of 16S rRNA. May be needed both before and after RbfA during the maturation of 16S rRNA. It has affinity for free ribosomal 30S subunits but not for 70S ribosomes. This chain is Ribosome maturation factor RimM, found in Burkholderia ambifaria (strain MC40-6).